The following is a 264-amino-acid chain: S-adenosylmethionine decarboxylase proenzyme (264 aa).

Serine 112 acts as the Schiff-base intermediate with substrate; via pyruvic acid in catalysis. At serine 112 the chain carries Pyruvic acid (Ser); by autocatalysis. Histidine 117 functions as the Proton acceptor; for processing activity in the catalytic mechanism. Catalysis depends on cysteine 140, which acts as the Proton donor; for catalytic activity.

The protein belongs to the prokaryotic AdoMetDC family. Type 2 subfamily. As to quaternary structure, heterooctamer of four alpha and four beta chains arranged as a tetramer of alpha/beta heterodimers. The cofactor is pyruvate. Is synthesized initially as an inactive proenzyme. Formation of the active enzyme involves a self-maturation process in which the active site pyruvoyl group is generated from an internal serine residue via an autocatalytic post-translational modification. Two non-identical subunits are generated from the proenzyme in this reaction, and the pyruvate is formed at the N-terminus of the alpha chain, which is derived from the carboxyl end of the proenzyme. The post-translation cleavage follows an unusual pathway, termed non-hydrolytic serinolysis, in which the side chain hydroxyl group of the serine supplies its oxygen atom to form the C-terminus of the beta chain, while the remainder of the serine residue undergoes an oxidative deamination to produce ammonia and the pyruvoyl group blocking the N-terminus of the alpha chain.

The catalysed reaction is S-adenosyl-L-methionine + H(+) = S-adenosyl 3-(methylsulfanyl)propylamine + CO2. Its pathway is amine and polyamine biosynthesis; S-adenosylmethioninamine biosynthesis; S-adenosylmethioninamine from S-adenosyl-L-methionine: step 1/1. In terms of biological role, catalyzes the decarboxylation of S-adenosylmethionine to S-adenosylmethioninamine (dcAdoMet), the propylamine donor required for the synthesis of the polyamines spermine and spermidine from the diamine putrescine. This Yersinia pseudotuberculosis serotype O:1b (strain IP 31758) protein is S-adenosylmethionine decarboxylase proenzyme.